A 351-amino-acid polypeptide reads, in one-letter code: N-acetyl-gamma-glutamyl-phosphate reductase (351 aa).

Cys154 is a catalytic residue.

This sequence belongs to the NAGSA dehydrogenase family. Type 1 subfamily.

The protein resides in the cytoplasm. The enzyme catalyses N-acetyl-L-glutamate 5-semialdehyde + phosphate + NADP(+) = N-acetyl-L-glutamyl 5-phosphate + NADPH + H(+). Its pathway is amino-acid biosynthesis; L-arginine biosynthesis; N(2)-acetyl-L-ornithine from L-glutamate: step 3/4. Functionally, catalyzes the NADPH-dependent reduction of N-acetyl-5-glutamyl phosphate to yield N-acetyl-L-glutamate 5-semialdehyde. This chain is N-acetyl-gamma-glutamyl-phosphate reductase, found in Prochlorococcus marinus (strain MIT 9515).